Reading from the N-terminus, the 504-residue chain is Histidine ammonia-lyase (504 aa).

The segment at residues 142 to 144 (ASG) is a cross-link (5-imidazolinone (Ala-Gly)). 2,3-didehydroalanine (Ser) is present on Ser-143.

Belongs to the PAL/histidase family. In terms of processing, contains an active site 4-methylidene-imidazol-5-one (MIO), which is formed autocatalytically by cyclization and dehydration of residues Ala-Ser-Gly.

It localises to the cytoplasm. It carries out the reaction L-histidine = trans-urocanate + NH4(+). Its pathway is amino-acid degradation; L-histidine degradation into L-glutamate; N-formimidoyl-L-glutamate from L-histidine: step 1/3. This chain is Histidine ammonia-lyase, found in Staphylococcus aureus (strain MSSA476).